A 182-amino-acid chain; its full sequence is MPLFLVLKATLSENVTKVSIENTNESRAEFAFDLQCTSCRELHDSKVIINTFEEYAMPASKGTASFLMKCKFCSKELSVNLCAFEDEYLTDQSDDKWAKIKDVRKKHGLSKVKEDSFIPLSLDCRGCELIKFYPDTITFEVSLSSGKVMSCQLEDNEWYDYDDNLGEEVTMTDFSSSIIKGK.

Residues cysteine 36, cysteine 39, cysteine 70, and cysteine 73 each coordinate Zn(2+).

This sequence belongs to the UPF0587 family.

The chain is UPF0587 protein YCR090C from Saccharomyces cerevisiae (strain ATCC 204508 / S288c) (Baker's yeast).